Reading from the N-terminus, the 453-residue chain is Ezy-1 protein (453 aa).

The signal sequence occupies residues 1 to 28 (MQLSNSLRSARSAAASSGCALASRPVVA). Disordered regions lie at residues 167–187 (SDGG…DADG), 272–307 (TGKA…SSGG), and 412–453 (SAGD…SPNM). Over residues 279-300 (AEGDDGEGEEEGEAQDVGEDAV) the composition is skewed to acidic residues. The span at 415-425 (DGHEPEPKRPE) shows a compositional bias: basic and acidic residues.

In Chlamydomonas reinhardtii (Chlamydomonas smithii), this protein is Ezy-1 protein (Ezy-1).